The sequence spans 264 residues: 3-methyl-2-oxobutanoate hydroxymethyltransferase (264 aa).

Mg(2+)-binding residues include Asp-45 and Asp-84. 3-methyl-2-oxobutanoate-binding positions include 45-46 (DS), Asp-84, and Lys-112. Glu-114 serves as a coordination point for Mg(2+). The Proton acceptor role is filled by Glu-181.

This sequence belongs to the PanB family. Homodecamer; pentamer of dimers. Mg(2+) is required as a cofactor.

The protein resides in the cytoplasm. The enzyme catalyses 3-methyl-2-oxobutanoate + (6R)-5,10-methylene-5,6,7,8-tetrahydrofolate + H2O = 2-dehydropantoate + (6S)-5,6,7,8-tetrahydrofolate. It participates in cofactor biosynthesis; (R)-pantothenate biosynthesis; (R)-pantoate from 3-methyl-2-oxobutanoate: step 1/2. Its function is as follows. Catalyzes the reversible reaction in which hydroxymethyl group from 5,10-methylenetetrahydrofolate is transferred onto alpha-ketoisovalerate to form ketopantoate. The polypeptide is 3-methyl-2-oxobutanoate hydroxymethyltransferase (Pseudoalteromonas translucida (strain TAC 125)).